The sequence spans 226 residues: Phosphoglycolate phosphatase (226 aa).

Asp5 serves as the catalytic Nucleophile. Mg(2+)-binding residues include Asp5 and Asp7. Residue Lys142 participates in substrate binding. Mg(2+)-binding residues include Asp164 and Asp168.

The protein belongs to the archaeal SPP-like hydrolase family. Requires Mg(2+) as cofactor.

It catalyses the reaction 2-phosphoglycolate + H2O = glycolate + phosphate. In terms of biological role, catalyzes the dephosphorylation of 2-phosphoglycolate. This Sulfurisphaera tokodaii (strain DSM 16993 / JCM 10545 / NBRC 100140 / 7) (Sulfolobus tokodaii) protein is Phosphoglycolate phosphatase.